We begin with the raw amino-acid sequence, 100 residues long: Small ribosomal subunit protein uS14c (100 aa).

The protein belongs to the universal ribosomal protein uS14 family. In terms of assembly, part of the 30S ribosomal subunit.

It localises to the plastid. The protein resides in the chloroplast. Binds 16S rRNA, required for the assembly of 30S particles. The polypeptide is Small ribosomal subunit protein uS14c (Chaetosphaeridium globosum (Charophycean green alga)).